A 212-amino-acid polypeptide reads, in one-letter code: Pyridoxine/pyridoxamine 5'-phosphate oxidase (212 aa).

Substrate contacts are provided by residues 8-11 (RRNY) and Lys-66. Residues 61–66 (RIVLLK), 76–77 (FT), Arg-82, Lys-83, and Gln-105 contribute to the FMN site. Tyr-123, Arg-127, and Ser-131 together coordinate substrate. Residues 140–141 (QS) and Trp-184 contribute to the FMN site. 190–192 (RLH) lines the substrate pocket. Arg-194 contributes to the FMN binding site.

It belongs to the pyridoxamine 5'-phosphate oxidase family. As to quaternary structure, homodimer. It depends on FMN as a cofactor.

The catalysed reaction is pyridoxamine 5'-phosphate + O2 + H2O = pyridoxal 5'-phosphate + H2O2 + NH4(+). It carries out the reaction pyridoxine 5'-phosphate + O2 = pyridoxal 5'-phosphate + H2O2. Its pathway is cofactor metabolism; pyridoxal 5'-phosphate salvage; pyridoxal 5'-phosphate from pyridoxamine 5'-phosphate: step 1/1. The protein operates within cofactor metabolism; pyridoxal 5'-phosphate salvage; pyridoxal 5'-phosphate from pyridoxine 5'-phosphate: step 1/1. Catalyzes the oxidation of either pyridoxine 5'-phosphate (PNP) or pyridoxamine 5'-phosphate (PMP) into pyridoxal 5'-phosphate (PLP). This Cupriavidus metallidurans (strain ATCC 43123 / DSM 2839 / NBRC 102507 / CH34) (Ralstonia metallidurans) protein is Pyridoxine/pyridoxamine 5'-phosphate oxidase.